We begin with the raw amino-acid sequence, 234 residues long: Ribosomal RNA small subunit methyltransferase G (234 aa).

S-adenosyl-L-methionine is bound by residues glycine 74, phenylalanine 79, 125–126 (AE), and arginine 144.

Belongs to the methyltransferase superfamily. RNA methyltransferase RsmG family.

It is found in the cytoplasm. Its function is as follows. Specifically methylates the N7 position of a guanine in 16S rRNA. The polypeptide is Ribosomal RNA small subunit methyltransferase G (Roseiflexus castenholzii (strain DSM 13941 / HLO8)).